The sequence spans 130 residues: Guanyl-specific ribonuclease T1 (130 aa).

An N-terminal signal peptide occupies residues methionine 1–arginine 26. Disulfide bonds link cysteine 28/cysteine 36 and cysteine 32/cysteine 129. Residue histidine 66 is part of the active site. The Proton acceptor role is filled by glutamate 84. Histidine 118 serves as the catalytic Proton donor.

Belongs to the ribonuclease N1/T1 family. As to quaternary structure, monomer.

It carries out the reaction [RNA] containing guanosine + H2O = an [RNA fragment]-3'-guanosine-3'-phosphate + a 5'-hydroxy-ribonucleotide-3'-[RNA fragment].. The polypeptide is Guanyl-specific ribonuclease T1 (rntA) (Aspergillus oryzae (strain ATCC 42149 / RIB 40) (Yellow koji mold)).